Reading from the N-terminus, the 328-residue chain is Ferredoxin--NADP reductase 1 (328 aa).

The FAD site is built by Asp-28, Gln-36, Tyr-41, Ala-81, Ile-116, Asp-277, and Ser-320.

Belongs to the ferredoxin--NADP reductase type 2 family. Homodimer. The cofactor is FAD.

It carries out the reaction 2 reduced [2Fe-2S]-[ferredoxin] + NADP(+) + H(+) = 2 oxidized [2Fe-2S]-[ferredoxin] + NADPH. This chain is Ferredoxin--NADP reductase 1, found in Sulfolobus acidocaldarius (strain ATCC 33909 / DSM 639 / JCM 8929 / NBRC 15157 / NCIMB 11770).